Reading from the N-terminus, the 357-residue chain is Protein-glutamate methylesterase/protein-glutamine glutaminase 1 (357 aa).

One can recognise a Response regulatory domain in the interval 10–127 (RTLIVDDSAF…DVNKIEKELV (118 aa)). Residue Asp61 is modified to 4-aspartylphosphate. The 195-residue stretch at 159–353 (SCAGDFAVLI…EEIVRMSEVK (195 aa)) folds into the CheB-type methylesterase domain. Active-site residues include Ser171, His198, and Asp295.

It belongs to the CheB family. Phosphorylated by CheA. Phosphorylation of the N-terminal regulatory domain activates the methylesterase activity.

Its subcellular location is the cytoplasm. The catalysed reaction is [protein]-L-glutamate 5-O-methyl ester + H2O = L-glutamyl-[protein] + methanol + H(+). It catalyses the reaction L-glutaminyl-[protein] + H2O = L-glutamyl-[protein] + NH4(+). In terms of biological role, involved in chemotaxis. Part of a chemotaxis signal transduction system that modulates chemotaxis in response to various stimuli. Catalyzes the demethylation of specific methylglutamate residues introduced into the chemoreceptors (methyl-accepting chemotaxis proteins or MCP) by CheR. Also mediates the irreversible deamidation of specific glutamine residues to glutamic acid. This chain is Protein-glutamate methylesterase/protein-glutamine glutaminase 1, found in Methanosarcina mazei (strain ATCC BAA-159 / DSM 3647 / Goe1 / Go1 / JCM 11833 / OCM 88) (Methanosarcina frisia).